Here is an 839-residue protein sequence, read N- to C-terminus: Autophagy-related protein 9A (839 aa).

The disordered stretch occupies residues 1–21 (MAQFDTEYQRLEASYSDSPPG). Residue Ala2 is modified to N-acetylalanine. Topologically, residues 2–61 (AQFDTEYQRLEASYSDSPPGEEDLLVHVPEGSKSPWHHIENLDLFFSRVYNLHQKNGFTC) are cytoplasmic. The short motif at 8–11 (YQRL) is the Tyrosine-based sorting signal element. Ser14, Ser16, and Ser18 each carry phosphoserine. The chain crosses the membrane as a helical span at residues 62–84 (MLIGEIFELMQFLFVVAFTTFLV). The Lumenal portion of the chain corresponds to 85–128 (SCVDYDILFANKMVNHSLHPTEPVKVTLPDAFLPAQVCSARIQE). N-linked (GlcNAc...) asparagine glycosylation occurs at Asn99. The helical transmembrane segment at 129-154 (NGSLITILVIAGVFWVHRLIKFIYNI) threads the bilayer. Residues 155–290 (CCYWEIHSFY…ELAQRLSNRI (136 aa)) lie on the Cytoplasmic side of the membrane. The stretch at 291–301 (LWIGIANFLLC) is an intramembrane region. Residues 302-319 (PLILIWQILYAFFSYAEV) are Cytoplasmic-facing. Residues 320 to 328 (LKREPGALG) lie within the membrane without spanning it. The Cytoplasmic segment spans residues 329–371 (ARCWSLYGRCYLRHFNELEHELQSRLNRGYKPASKYMNCFLSP). A helical membrane pass occupies residues 372 to 397 (LLTLLAKNCAFFAGSILAVLIALTIY). Residues 398-406 (DEDVLAVEH) are Lumenal-facing. The helical transmembrane segment at 407–424 (VLTTVTLLGVTVTVCRSF) threads the bilayer. Over 425 to 470 (IPDQHMVFCPEQLLRVILAHIHYMPDHWQGNAHRSQTRDEFAQLFQ) the chain is Cytoplasmic. An intramembrane segment occupies 471-480 (YKAVFILEEL). At 481-483 (LSP) the chain is on the cytoplasmic side. An intramembrane segment occupies 484 to 492 (IVTPLILIF). At 493–839 (CLRPRALEII…DELPPQVHKV (347 aa)) the chain is on the cytoplasmic side. Residues Ser656, Ser735, Ser738, Ser741, and Ser828 each carry the phosphoserine modification. Disordered regions lie at residues 656–688 (SPLQ…GSSV) and 719–839 (QQAQ…VHKV). Basic and acidic residues predominate over residues 724 to 736 (EPERHVWHRRESD). Acidic residues-rich tracts occupy residues 737-747 (ESGESAPEEGG) and 823-832 (VPEEGSEDEL).

This sequence belongs to the ATG9 family. Homotrimer; forms a homotrimer with a central pore that forms a path between the two membrane leaflets. Interacts (via cytoplasmic its C-terminus) with ATG2A. Interacts with SUPT20H. Interacts (via the tyrosine-based sorting signal motif) with AP4M1; promoting association with the AP-4 complex. Interacts with ARFIP1 and ARFIP2. Interacts with PI4K2A and PI4KB. Interacts with ATG4A; the interaction is direct and promotes ATG9A trafficking. In terms of processing, ufmylated in a DDRGK1 dependent manner.

It is found in the preautophagosomal structure membrane. Its subcellular location is the cytoplasmic vesicle. The protein resides in the autophagosome membrane. It localises to the golgi apparatus. The protein localises to the trans-Golgi network membrane. It is found in the late endosome membrane. Its subcellular location is the recycling endosome membrane. The protein resides in the endoplasmic reticulum membrane. It localises to the mitochondrion membrane. The catalysed reaction is a 1,2-diacyl-sn-glycero-3-phosphocholine(in) = a 1,2-diacyl-sn-glycero-3-phosphocholine(out). It carries out the reaction a 1,2-diacyl-sn-glycero-3-phospho-L-serine(in) = a 1,2-diacyl-sn-glycero-3-phospho-L-serine(out). The enzyme catalyses a 1,2-diacyl-sn-glycero-3-phosphoethanolamine(in) = a 1,2-diacyl-sn-glycero-3-phosphoethanolamine(out). Its function is as follows. Phospholipid scramblase involved in autophagy by mediating autophagosomal membrane expansion. Cycles between the preautophagosomal structure/phagophore assembly site (PAS) and the cytoplasmic vesicle pool and supplies membrane for the growing autophagosome. Lipid scramblase activity plays a key role in preautophagosomal structure/phagophore assembly by distributing the phospholipids that arrive through ATG2 (ATG2A or ATG2B) from the cytoplasmic to the luminal leaflet of the bilayer, thereby driving autophagosomal membrane expansion. Also required to supply phosphatidylinositol 4-phosphate to the autophagosome initiation site by recruiting the phosphatidylinositol 4-kinase beta (PI4KB) in a process dependent on ARFIP2, but not ARFIP1. In addition to autophagy, also plays a role in necrotic cell death. The polypeptide is Autophagy-related protein 9A (Bos taurus (Bovine)).